We begin with the raw amino-acid sequence, 274 residues long: Large ribosomal subunit protein uL2cz/uL2cy (274 aa).

Polar residues predominate over residues Met-1–Asn-15. 2 disordered regions span residues Met-1–Val-22 and Pro-225–Lys-274.

It belongs to the universal ribosomal protein uL2 family. As to quaternary structure, part of the 50S ribosomal subunit.

The protein localises to the plastid. It localises to the chloroplast. The protein is Large ribosomal subunit protein uL2cz/uL2cy (rpl2-A) of Lobularia maritima (Sweet alyssum).